The following is a 622-amino-acid chain: FERM domain-containing protein 6 (622 aa).

The region spanning 16–328 (RSVCIFLPND…NSHRLYMNLQ (313 aa)) is the FERM domain. Residues 364–445 (KRSRASGSSA…SGVESGGKDR (82 aa)) are disordered. Composition is skewed to low complexity over residues 384-395 (HSTASHSSSHTS) and 425-438 (SSMTSHGSSHTSGV). Residue serine 522 is modified to Phosphoserine. A Phosphothreonine modification is found at threonine 523. Residues serine 525, serine 542, and serine 544 each carry the phosphoserine modification.

Its subcellular location is the cytoplasm. It is found in the cell membrane. The polypeptide is FERM domain-containing protein 6 (FRMD6) (Homo sapiens (Human)).